The sequence spans 609 residues: Rhotekin-2 (609 aa).

The 77-residue stretch at 5 to 81 (SLRGPALRLA…LQKLEEQIAN (77 aa)) folds into the REM-1 domain. Positions 56 to 91 (KNLMVCNARLMAYTSELQKLEEQIANQTGRCDVKFE) form a coiled coil. The 108-residue stretch at 286–393 (EDAFAGFLNQ…WMEAFWQHFF (108 aa)) folds into the PH domain. Disordered regions lie at residues 495–520 (HDEK…KSQS) and 554–609 (KPMA…QAQV). The span at 569 to 582 (RLSDGEHTDTKTNF) shows a compositional bias: basic and acidic residues.

In terms of tissue distribution, expressed in lymphocytes, CD4 positive T-cells and bone marrow-derived cells. Also expressed in lung, colon, thymus and brain.

May play an important role in lymphopoiesis. The chain is Rhotekin-2 (RTKN2) from Homo sapiens (Human).